The chain runs to 413 residues: ATP phosphoribosyltransferase 2, chloroplastic (413 aa).

A chloroplast-targeting transit peptide spans 1–57 (MPISIPLNATLQYSSPSSSSSSSSLVPSSPLFSPIPSTTVSLTGIRQRCLRMVTSCV).

It belongs to the ATP phosphoribosyltransferase family. Long subfamily. It depends on Mg(2+) as a cofactor.

The protein resides in the plastid. The protein localises to the chloroplast. The enzyme catalyses 1-(5-phospho-beta-D-ribosyl)-ATP + diphosphate = 5-phospho-alpha-D-ribose 1-diphosphate + ATP. It participates in amino-acid biosynthesis; L-histidine biosynthesis; L-histidine from 5-phospho-alpha-D-ribose 1-diphosphate: step 1/9. Feedback inhibited by L-histidine. In terms of biological role, catalyzes the condensation of ATP and 5-phosphoribose 1-diphosphate to form N'-(5'-phosphoribosyl)-ATP (PR-ATP). In Arabidopsis thaliana (Mouse-ear cress), this protein is ATP phosphoribosyltransferase 2, chloroplastic (HISN1B).